Reading from the N-terminus, the 437-residue chain is GTPase Obg (437 aa).

Residues 2–160 enclose the Obg domain; that stretch reads SMFLDTAKIS…RQLELELKIL (159 aa). Residues 161-338 form the OBG-type G domain; the sequence is ADVGLVGFPS…LLEATAELLA (178 aa). GTP is bound by residues 167–174, 192–196, 214–217, 284–287, and 319–321; these read GFPSVGKS, FTTIV, DLPG, NKMD, and SSL. Mg(2+)-binding residues include Ser-174 and Thr-194. Residues 359 to 437 enclose the OCT domain; sequence GFAEAEKEFE…IGKFEFEFVD (79 aa).

Belongs to the TRAFAC class OBG-HflX-like GTPase superfamily. OBG GTPase family. Monomer. Mg(2+) serves as cofactor.

It is found in the cytoplasm. Its function is as follows. An essential GTPase which binds GTP, GDP and possibly (p)ppGpp with moderate affinity, with high nucleotide exchange rates and a fairly low GTP hydrolysis rate. Plays a role in control of the cell cycle, stress response, ribosome biogenesis and in those bacteria that undergo differentiation, in morphogenesis control. The sequence is that of GTPase Obg from Streptococcus pyogenes serotype M3 (strain ATCC BAA-595 / MGAS315).